A 468-amino-acid chain; its full sequence is ATP synthase subunit beta 2 (468 aa).

145-152 (GGAGVGKT) is a binding site for ATP.

This sequence belongs to the ATPase alpha/beta chains family. In terms of assembly, F-type ATPases have 2 components, CF(1) - the catalytic core - and CF(0) - the membrane proton channel. CF(1) has five subunits: alpha(3), beta(3), gamma(1), delta(1), epsilon(1). CF(0) has three main subunits: a(1), b(2) and c(9-12). The alpha and beta chains form an alternating ring which encloses part of the gamma chain. CF(1) is attached to CF(0) by a central stalk formed by the gamma and epsilon chains, while a peripheral stalk is formed by the delta and b chains.

It is found in the cell membrane. The catalysed reaction is ATP + H2O + 4 H(+)(in) = ADP + phosphate + 5 H(+)(out). Its function is as follows. Produces ATP from ADP in the presence of a proton gradient across the membrane. The catalytic sites are hosted primarily by the beta subunits. This chain is ATP synthase subunit beta 2, found in Mycoplasmopsis pulmonis (strain UAB CTIP) (Mycoplasma pulmonis).